We begin with the raw amino-acid sequence, 270 residues long: Protoheme IX farnesyltransferase (270 aa).

Helical transmembrane passes span 13-30, 33-53, 95-115, 129-149, 156-176, 207-227, and 249-269; these read LALL…LVPD, HATL…GSAL, LLVL…ALAW, LALA…WTLA, YRII…FWLF, LWLG…LMAP, and EATL…ALLL.

The protein belongs to the UbiA prenyltransferase family. Protoheme IX farnesyltransferase subfamily.

The protein resides in the cell inner membrane. It catalyses the reaction heme b + (2E,6E)-farnesyl diphosphate + H2O = Fe(II)-heme o + diphosphate. It functions in the pathway porphyrin-containing compound metabolism; heme O biosynthesis; heme O from protoheme: step 1/1. Converts heme B (protoheme IX) to heme O by substitution of the vinyl group on carbon 2 of heme B porphyrin ring with a hydroxyethyl farnesyl side group. The polypeptide is Protoheme IX farnesyltransferase (Geobacter sulfurreducens (strain ATCC 51573 / DSM 12127 / PCA)).